The following is a 278-amino-acid chain: Large ribosomal subunit protein uL2 (278 aa).

Disordered regions lie at residues 1 to 20, 25 to 58, and 223 to 278; these read MGIR…SVSD, TRST…GGGH, and GVVM…GKKR. Residues 37 to 58 show a composition bias toward basic residues; it reads LHGKGGRNAHGRITTRHKGGGH. The span at 253–268 shows a compositional bias: basic and acidic residues; it reads PEGRTRKPNKPSDKLI. The segment covering 269 to 278 has biased composition (basic residues); it reads VRRRRTGKKR.

This sequence belongs to the universal ribosomal protein uL2 family. Part of the 50S ribosomal subunit. Forms a bridge to the 30S subunit in the 70S ribosome.

In terms of biological role, one of the primary rRNA binding proteins. Required for association of the 30S and 50S subunits to form the 70S ribosome, for tRNA binding and peptide bond formation. It has been suggested to have peptidyltransferase activity; this is somewhat controversial. Makes several contacts with the 16S rRNA in the 70S ribosome. In Mycolicibacterium smegmatis (strain ATCC 700084 / mc(2)155) (Mycobacterium smegmatis), this protein is Large ribosomal subunit protein uL2.